The sequence spans 601 residues: MEGSDFLLAGVLFLFAAVAAVPLASRLGIGAVLGYLLAGIAIGPWGLGFISDVDEILHFSELGVVFLMFIIGLELNPSKLWQLRRSIFGVGAAQVLLSAALLAGLLMLTDFAWQAAVVGGIGLAMSSTAMALQLMREKGMNRSESGQLGFSVLLFQDLAVIPALALVPLLAGSADEHFDWMKIGMKVLAFVGMLIGGRYLLRPVFRFIAASGVREVFTAATLLLVLGSALFMDALGLSMALGTFIAGVLLAESEYRHELETAIDPFKGLLLGLFFISVGMSLNLGVLYTHLLWVVISVVVLVAVKILVLYLLARLYGVRSSERMQFAGVLSQGGEFAFVLFSTASSQRLFQGDQMALLLVTVTLSMMTTPLLMKLVDKWLSRQFNGPEEEDEKPWVNDDKPQVIVVGFGRFGQVIGRLLMANKMRITVLERDISAVNLMRKYGYKVYYGDATQVDLLRSAGAEAAESIVITCNEPEDTMKLVEICQQHFPHLHILARARGRVEAHELLQAGVTQFSRETFSSALELGRKTLVTLGMHPHQAQRAQLHFRRLDMRMLRELIPMHADTVQISRAREARRELEEIFQREMQQERRQLDGWDEFE.

Transmembrane regions (helical) follow at residues 4-24 (SDFLLAGVLFLFAAVAAVPLA), 29-49 (IGAVLGYLLAGIAIGPWGLGF), 55-75 (EILHFSELGVVFLMFIIGLEL), 87-107 (IFGVGAAQVLLSAALLAGLLM), 115-135 (AAVVGGIGLAMSSTAMALQLM), 152-172 (VLLFQDLAVIPALALVPLLAG), 177-197 (HFDWMKIGMKVLAFVGMLIGG), 207-227 (FIAASGVREVFTAATLLLVLG), 230-250 (LFMDALGLSMALGTFIAGVLL), 268-288 (GLLLGLFFISVGMSLNLGVLY), 291-311 (LLWVVISVVVLVAVKILVLYL), 324-344 (MQFAGVLSQGGEFAFVLFSTA), and 356-376 (ALLLVTVTLSMMTTPLLMKLV). One can recognise an RCK N-terminal domain in the interval 400–519 (KPQVIVVGFG…AGVTQFSRET (120 aa)).

The protein belongs to the monovalent cation:proton antiporter 2 (CPA2) transporter (TC 2.A.37) family. KefB subfamily. In terms of assembly, interacts with the regulatory subunit KefG.

The protein localises to the cell inner membrane. Its function is as follows. Pore-forming subunit of a potassium efflux system that confers protection against electrophiles. Catalyzes K(+)/H(+) antiport. The chain is Glutathione-regulated potassium-efflux system protein KefB from Shigella sonnei (strain Ss046).